We begin with the raw amino-acid sequence, 184 residues long: ADP-ribosylation factor-like protein 2 (184 aa).

The N-myristoyl glycine moiety is linked to residue glycine 2. 23 to 30 (GLDNAGKT) serves as a coordination point for GTP. A Phosphoserine modification is found at serine 45. GTP is bound by residues 66–70 (DVGGQ) and glycine 68. Lysine 71 is covalently cross-linked (Glycyl lysine isopeptide (Lys-Gly) (interchain with G-Cter in ubiquitin)). A GTP-binding site is contributed by 125 to 128 (NKQD).

Belongs to the small GTPase superfamily. Arf family. Found in a complex with ARL2, ARL2BP and SLC25A6. Found in a complex with at least ARL2, PPP2CB, PPP2R1A, PPP2R2A, PPP2R5E and TBCD. Interacts with ELMOD2. The GTP-bound form interacts with ARL2BP. The GDP-bound form interacts preferentially with TBCD. Interacts with UNC119. Found in a complex with ARL2, ARL2BP and SLC25A4. The GTP-bound form interacts with PDE6D. In terms of processing, not N-myristoylated. Expressed in brain, retina, lung, cerebellum, liver, kidney, hippocampus, spleen, cortex and heart (at protein level).

The protein localises to the mitochondrion intermembrane space. It localises to the cytoplasm. The protein resides in the cytoskeleton. It is found in the microtubule organizing center. Its subcellular location is the centrosome. The protein localises to the nucleus. Functionally, small GTP-binding protein which cycles between an inactive GDP-bound and an active GTP-bound form, and the rate of cycling is regulated by guanine nucleotide exchange factors (GEF) and GTPase-activating proteins (GAP). GTP-binding protein that does not act as an allosteric activator of the cholera toxin catalytic subunit. Regulates formation of new microtubules and centrosome integrity. Prevents the TBCD-induced microtubule destruction. Participates in association with TBCD, in the disassembly of the apical junction complexes. Antagonizes the effect of TBCD on epithelial cell detachment and tight and adherens junctions disassembly. Together with ARL2, plays a role in the nuclear translocation, retention and transcriptional activity of STAT3. Component of a regulated secretory pathway involved in Ca(2+)-dependent release of acetylcholine. Required for normal progress through the cell cycle. The sequence is that of ADP-ribosylation factor-like protein 2 (Arl2) from Rattus norvegicus (Rat).